Consider the following 259-residue polypeptide: Proteasome subunit alpha type-7 (259 aa).

This sequence belongs to the peptidase T1A family. The 26S proteasome consists of a 20S proteasome core and two 19S regulatory subunits. The 20S proteasome core is composed of 28 subunits that are arranged in four stacked rings, resulting in a barrel-shaped structure. The two end rings are each formed by seven alpha subunits, and the two central rings are each formed by seven beta subunits. The catalytic chamber with the active sites is on the inside of the barrel.

It is found in the cytoplasm. Its subcellular location is the nucleus. In terms of biological role, the proteasome is a multicatalytic proteinase complex which is characterized by its ability to cleave peptides with Arg, Phe, Tyr, Leu, and Glu adjacent to the leaving group at neutral or slightly basic pH. The proteasome has an ATP-dependent proteolytic activity. The chain is Proteasome subunit alpha type-7 (PAD1) from Solanum lycopersicum (Tomato).